The chain runs to 170 residues: Adenine phosphoribosyltransferase (170 aa).

Belongs to the purine/pyrimidine phosphoribosyltransferase family. As to quaternary structure, homodimer.

The protein resides in the cytoplasm. The catalysed reaction is AMP + diphosphate = 5-phospho-alpha-D-ribose 1-diphosphate + adenine. Its pathway is purine metabolism; AMP biosynthesis via salvage pathway; AMP from adenine: step 1/1. In terms of biological role, catalyzes a salvage reaction resulting in the formation of AMP, that is energically less costly than de novo synthesis. This Fusobacterium nucleatum subsp. nucleatum (strain ATCC 25586 / DSM 15643 / BCRC 10681 / CIP 101130 / JCM 8532 / KCTC 2640 / LMG 13131 / VPI 4355) protein is Adenine phosphoribosyltransferase.